Here is a 1921-residue protein sequence, read N- to C-terminus: Histone transcription regulator 3 homolog (1921 aa).

4 disordered regions span residues 350–439 (IGEV…LEKQ), 1402–1466 (GEDA…ATPV), 1738–1769 (PGSAQPPALPAPATTATTAGKKEDGKKEKTRV), and 1799–1921 (KGPP…SAPE). Composition is skewed to basic and acidic residues over residues 353-376 (VENKSSTEENKKQESPENGDKKEA) and 391-400 (TTVKTEDRDS). Positions 413–422 (GTTSSSQPPS) are enriched in polar residues. Residues 428 to 439 (RGADEPAELEKQ) are compositionally biased toward basic and acidic residues. The span at 1402 to 1425 (GEDADMESGDDSDSDSEVGSDSET) shows a compositional bias: acidic residues. A compositionally biased stretch (basic and acidic residues) spans 1757 to 1769 (GKKEDGKKEKTRV). The span at 1806–1818 (SSNGSSSNSGTRS) shows a compositional bias: low complexity. Composition is skewed to basic and acidic residues over residues 1819–1836 (NSEEKEKEPTEEPEKSTQ) and 1861–1890 (EADKSAEEDKSDKSAEEEKTDKFAEEEKSA). Residues 1899-1910 (TPKSKSTGSNGV) show a composition bias toward polar residues.

The protein belongs to the HIR3 family.

It localises to the nucleus. In terms of biological role, has a role in a nucleosome assembly pathway that is required for the integrity of heterochromatin and proper chromosome segregation. This Yarrowia lipolytica (strain CLIB 122 / E 150) (Yeast) protein is Histone transcription regulator 3 homolog (HIR3).